A 543-amino-acid polypeptide reads, in one-letter code: CTP synthase (543 aa).

The amidoligase domain stretch occupies residues 1-265 (MTRFIFVTGG…DQIVLDKFGL (265 aa)). Serine 13 contacts CTP. Residue serine 13 coordinates UTP. ATP contacts are provided by residues 14-19 (SLGKGI) and aspartate 71. Positions 71 and 139 each coordinate Mg(2+). CTP contacts are provided by residues 146–148 (DIE), 186–191 (KTKPTQ), and lysine 222. UTP contacts are provided by residues 186-191 (KTKPTQ) and lysine 222. The region spanning 290-541 (TIAMVGKYMD…IQAAVEQNER (252 aa)) is the Glutamine amidotransferase type-1 domain. Glycine 351 serves as a coordination point for L-glutamine. Cysteine 378 functions as the Nucleophile; for glutamine hydrolysis in the catalytic mechanism. Residues 379-382 (LGMQ), glutamate 402, and arginine 469 each bind L-glutamine. Active-site residues include histidine 514 and glutamate 516.

It belongs to the CTP synthase family. In terms of assembly, homotetramer.

The enzyme catalyses UTP + L-glutamine + ATP + H2O = CTP + L-glutamate + ADP + phosphate + 2 H(+). It catalyses the reaction L-glutamine + H2O = L-glutamate + NH4(+). It carries out the reaction UTP + NH4(+) + ATP = CTP + ADP + phosphate + 2 H(+). It participates in pyrimidine metabolism; CTP biosynthesis via de novo pathway; CTP from UDP: step 2/2. Allosterically activated by GTP, when glutamine is the substrate; GTP has no effect on the reaction when ammonia is the substrate. The allosteric effector GTP functions by stabilizing the protein conformation that binds the tetrahedral intermediate(s) formed during glutamine hydrolysis. Inhibited by the product CTP, via allosteric rather than competitive inhibition. Its function is as follows. Catalyzes the ATP-dependent amination of UTP to CTP with either L-glutamine or ammonia as the source of nitrogen. Regulates intracellular CTP levels through interactions with the four ribonucleotide triphosphates. This is CTP synthase from Saccharophagus degradans (strain 2-40 / ATCC 43961 / DSM 17024).